A 91-amino-acid polypeptide reads, in one-letter code: UPF0250 protein BB0170 (91 aa).

Belongs to the UPF0250 family.

The polypeptide is UPF0250 protein BB0170 (Bordetella bronchiseptica (strain ATCC BAA-588 / NCTC 13252 / RB50) (Alcaligenes bronchisepticus)).